A 427-amino-acid chain; its full sequence is Trigger factor (427 aa).

In terms of domain architecture, PPIase FKBP-type spans 163-248 (GDTVVIDFVG…IHEVKAKEVP (86 aa)).

This sequence belongs to the FKBP-type PPIase family. Tig subfamily.

It is found in the cytoplasm. The catalysed reaction is [protein]-peptidylproline (omega=180) = [protein]-peptidylproline (omega=0). In terms of biological role, involved in protein export. Acts as a chaperone by maintaining the newly synthesized protein in an open conformation. Functions as a peptidyl-prolyl cis-trans isomerase. The sequence is that of Trigger factor from Streptococcus mutans serotype c (strain ATCC 700610 / UA159).